A 485-amino-acid chain; its full sequence is Outer membrane protein OprM (485 aa).

An N-terminal signal peptide occupies residues 1–17 (MKRSFLSLAVAAVVLSG). C18 carries the N-palmitoyl cysteine lipid modification. C18 carries S-diacylglycerol cysteine lipidation.

It belongs to the outer membrane factor (OMF) (TC 1.B.17) family. In terms of assembly, component of the MexAB-OprM multidrug efflux complex, composed of six MexA subunits forming a hexameric tube, binding to a MexB trimer, which interact with the trimeric OprM outer membrane channel protein. The OprM homotrimer forms a 135 Angstroms-long pore. It consists of a beta-barrel, which is probably inserted in the outer membrane, and an alpha-barrel formed by alpha-helices which probably spans the periplasm. In the ground state the periplasmic end is closed, while the outer membrane end opening is 6-8 Angstroms in diameter. OprM does not directly contact MexB; instead, MexA joins MexB and OprM by forming a funnel-like hexamer anchored to the inner membrane. MexA may initially form a hexameric ring complex with MexB prior to OprM, then OprM undergoes a conformational change as it contacts MexA, allowing the periplasmic gate to open. It is thought that, under high intracellular substrate concentration, MexB ejects substrate into the tunnel formed by MexA-OprM; as the substrate level declines, conformational changes in MexB cause efflux to reduce and stop and the complex shifts to the closed state. MexB subunit acts as a substrate:proton antiporter and activity is enhanced significantly when in complex with MexA and OprM, in vitro.

Its subcellular location is the cell outer membrane. Its activity is regulated as follows. Export of antibiotics and solvents is dramatically decreased in the presence of the protonophore carbonyl cyanide m-chlorophenylhydrazone (CCCP), therefore may be driven by a proton gradient. Antibiotic efflux is inhibited by pyridopyrimidine derivatives, such as ABI-PP, acting by binding to a hydrophobic pocket in MexB. The outer membrane component of the MexAB-OprM efflux system that confers multidrug resistance. Functions as the major efflux pump for n-hexane and p-xylene efflux. Has been shown in one study to be involved in the active efflux of the autoinducer N-(3-oxododecanoyl) homoserine lactone, thereby playing an indirect role in quorum-sensing; but has been shown in another study not to be involved in efflux of this autoinducer. Over-expression of the pump increases antibiotic and solvent efflux capacities. Can replace the OprJ outer membrane component of the MexCD-OprJ pump; the antibiotics exported are those exported by the intact MexCD pump, showing that efflux substrate specificity is not conferred by this component. Serves as the outer membrane component for the MexXY efflux system. Implicated in the secretion of the siderophore pyoverdine. OprM is probably involved in the efflux of the siderophore across the outer membrane. The sequence is that of Outer membrane protein OprM (oprM) from Pseudomonas aeruginosa (strain ATCC 15692 / DSM 22644 / CIP 104116 / JCM 14847 / LMG 12228 / 1C / PRS 101 / PAO1).